The chain runs to 341 residues: Tryptophan--tRNA ligase (341 aa).

ATP contacts are provided by residues 11-13 (RPT) and 19-20 (GH). The 'HIGH' region motif lies at 12–20 (PTGKLHIGH). Aspartate 140 contributes to the L-tryptophan binding site. ATP is bound by residues 152–154 (GTD), leucine 194, and 202–206 (KMSKS). Residues 202–206 (KMSKS) carry the 'KMSKS' region motif.

Belongs to the class-I aminoacyl-tRNA synthetase family. In terms of assembly, homodimer.

The protein localises to the cytoplasm. It catalyses the reaction tRNA(Trp) + L-tryptophan + ATP = L-tryptophyl-tRNA(Trp) + AMP + diphosphate + H(+). Functionally, catalyzes the attachment of tryptophan to tRNA(Trp). This Streptococcus agalactiae serotype III (strain NEM316) protein is Tryptophan--tRNA ligase.